Consider the following 586-residue polypeptide: Retron Ec67 protein (586 aa).

Residues phenylalanine 29–valine 262 enclose the Reverse transcriptase domain. 3 residues coordinate Mg(2+): aspartate 120, aspartate 201, and aspartate 202.

This sequence belongs to the bacterial reverse transcriptase family.

It catalyses the reaction DNA(n) + a 2'-deoxyribonucleoside 5'-triphosphate = DNA(n+1) + diphosphate. The enzyme catalyses Endonucleolytic cleavage to 5'-phosphomonoester.. Its function is as follows. Reverse transcriptase (RT) component of antiviral defense system retron Ec67, minimally composed of a non-coding RNA (ncRNA) and this RT. Expression of these 2 elements confers protection against bacteriophage T5. At multiplicity of infection (MOI) of 0.02 cultures grow normally when infected with T5 without collapsing, at MOI 2 cultures enter growth stasis. Responsible for synthesis of msDNA-Ec67 (a branched molecule with RNA linked by a 2',5'-phosphodiester bond to ssDNA). The retron transcript serves as primer (from a conserved internal G residue) and template for the reaction, and codes for the RT. Can use other retrons as substrate (msDNA-Mx162 and msDNA-Ec86). Also able to synthesize DNA from a DNA template at least in vitro, although the enzyme is less active with a DNA template. In Escherichia coli, this protein is Retron Ec67 protein.